The following is a 1637-amino-acid chain: Stress response protein NST1 (1637 aa).

Over residues 1-17 (MSNRGNLNLNLPPSSGK) the composition is skewed to polar residues. 10 disordered regions span residues 1 to 155 (MSNR…EITN), 221 to 252 (HQASNNNHIHNHSHTSSHPLQHTPNHLHHASH), 442 to 494 (LKMN…SQQL), 504 to 523 (KNNLQQNHHTHHHHQQPLQH), 681 to 734 (KTPY…EIDD), 746 to 825 (QHHH…EEEK), 871 to 1036 (AKRE…SKHV), 1049 to 1075 (SKQNQAQNGNQSHLPPQSRLRQDEENP), 1176 to 1299 (NSSQ…GAII), and 1512 to 1534 (YTQQQQQQQQPQPQPQSQQQYPL). Basic and acidic residues predominate over residues 24-33 (VHFELSKEKN). Low complexity-rich tracts occupy residues 34 to 53 (NSTNSNPHTSSTSTSNSNNT) and 64 to 113 (NDNN…QQQS). Over residues 124-134 (AKKRKKKKSKK) the composition is skewed to basic residues. Over residues 135 to 155 (SSNNNGNNSNTNSNSNSEITN) the composition is skewed to low complexity. Residues 446-470 (QRQQSQSQSQSQSQQQRDVQTAQSQ) are compositionally biased toward low complexity. Residues 471-487 (VLSKDSSLKNANTSMNK) are compositionally biased toward polar residues. Residues 692-706 (PAATSQDREQQVQPN) are compositionally biased toward polar residues. Residues 717 to 734 (DHEHEHEHEHEHEHEIDD) show a composition bias toward basic and acidic residues. Residues 754-808 (EEYDEEDEEDDEEYEYGDDEEEEDEEDEEEGEDEELEEVVEDDVDEEILDDEEEF) are compositionally biased toward acidic residues. Residues 855–1023 (KDNTRKLFEE…KQLEKEAAVS (169 aa)) adopt a coiled-coil conformation. Composition is skewed to basic and acidic residues over residues 871-887 (AKREKEAKKLKQKEKAK) and 896-1021 (AKEE…KEAA). The segment covering 1049 to 1063 (SKQNQAQNGNQSHLP) has biased composition (polar residues). The span at 1176-1199 (NSSQGSPWTTNSTLSSNLGSTGLS) shows a compositional bias: low complexity. Polar residues predominate over residues 1201 to 1228 (GQGQTVSGVNTNLPSSIGITSGGASQIF). Residues 1234 to 1257 (PQLQPHQPQQQQQQQQQQQQQQQQ) are compositionally biased toward low complexity. A compositionally biased stretch (polar residues) spans 1258-1267 (NYFSPFNSFS). Composition is skewed to low complexity over residues 1282–1299 (TTNINNSTTASSSTGAII) and 1514–1534 (QQQQQQQQPQPQPQSQQQYPL).

Belongs to the NST1 family.

Its subcellular location is the cytoplasm. Functionally, may act as a negative regulator of salt tolerance. The protein is Stress response protein NST1 (NST1) of Lodderomyces elongisporus (strain ATCC 11503 / CBS 2605 / JCM 1781 / NBRC 1676 / NRRL YB-4239) (Yeast).